Here is a 348-residue protein sequence, read N- to C-terminus: Nuclear receptor subfamily 1 group I member 3 (348 aa).

The segment at residues 8 to 83 (PRSCMVCGDR…AGMKKEMILS (76 aa)) is a DNA-binding region (nuclear receptor). The NR C4-type zinc finger occupies 11–31 (CMVCGDRATGYHFHALTCEGC). Thr38 bears the Phosphothreonine; by PKC mark. An NR C4-type zinc finger spans residues 47–71 (CPFAGSCKVNKAQRRHCPACRLQKC). Residues 109–348 (GQQELVQTLL…MMPLLQEICS (240 aa)) form the NR LBD domain.

It belongs to the nuclear hormone receptor family. NR1 subfamily. In terms of assembly, heterodimer of NR1I3 and RXR. Interacts with PSMC4. Interacts with ECT2. Directly interacts with DNAJC7; this complex may also include HSP90. Interacts with CRY1. Interacts with CRY2 in a ligand-dependent manner. Post-translationally, phosphorylated at Thr-38 by PKC, dephosphorylation of Thr-38 is required for nuclear translocation and activation.

Its subcellular location is the nucleus. It is found in the cytoplasm. The protein localises to the cytoskeleton. Binds and transactivates the retinoic acid response elements that control expression of the retinoic acid receptor beta 2 and alcohol dehydrogenase 3 genes. Transactivates both the phenobarbital responsive element module of the human CYP2B6 gene and the CYP3A4 xenobiotic response element. The chain is Nuclear receptor subfamily 1 group I member 3 (NR1I3) from Pusa sibirica (Baikal seal).